A 282-amino-acid polypeptide reads, in one-letter code: ATP phosphoribosyltransferase (282 aa).

This sequence belongs to the ATP phosphoribosyltransferase family. Long subfamily. Mg(2+) is required as a cofactor.

The protein localises to the cytoplasm. The enzyme catalyses 1-(5-phospho-beta-D-ribosyl)-ATP + diphosphate = 5-phospho-alpha-D-ribose 1-diphosphate + ATP. It participates in amino-acid biosynthesis; L-histidine biosynthesis; L-histidine from 5-phospho-alpha-D-ribose 1-diphosphate: step 1/9. Its activity is regulated as follows. Feedback inhibited by histidine. In terms of biological role, catalyzes the condensation of ATP and 5-phosphoribose 1-diphosphate to form N'-(5'-phosphoribosyl)-ATP (PR-ATP). Has a crucial role in the pathway because the rate of histidine biosynthesis seems to be controlled primarily by regulation of HisG enzymatic activity. The chain is ATP phosphoribosyltransferase from Pyrobaculum aerophilum (strain ATCC 51768 / DSM 7523 / JCM 9630 / CIP 104966 / NBRC 100827 / IM2).